The chain runs to 269 residues: Xyloglucan endotransglucosylase/hydrolase protein 24 (269 aa).

A signal peptide spans 1 to 21; it reads MSPFKIFFFTTLLVAAFSVSA. In terms of domain architecture, GH16 spans 22-212; the sequence is ADFNTDVNVA…WSKAPFMASY (191 aa). The active-site Nucleophile is the glutamate 98. The Proton donor role is filled by glutamate 102. Glutamate 102 contacts xyloglucan. An N-linked (GlcNAc...) asparagine glycan is attached at asparagine 106. Residues 115-117, 125-127, 191-192, glycine 196, and arginine 256 contribute to the xyloglucan site; these read HTN, DKE, and DW. Cysteines 251 and 265 form a disulfide.

This sequence belongs to the glycosyl hydrolase 16 family. XTH group 2 subfamily. Contains at least one intrachain disulfide bond essential for its enzymatic activity. In terms of processing, N-glycosylated; essential for its enzymatic activity. As to expression, highly expressed. Predominantly expressed in stems. Expressed in shoot apical meristems, also found in seedlings and meristems.

The protein localises to the secreted. Its subcellular location is the cell wall. The protein resides in the extracellular space. It is found in the apoplast. The enzyme catalyses breaks a beta-(1-&gt;4) bond in the backbone of a xyloglucan and transfers the xyloglucanyl segment on to O-4 of the non-reducing terminal glucose residue of an acceptor, which can be a xyloglucan or an oligosaccharide of xyloglucan.. Catalyzes xyloglucan endohydrolysis (XEH) and/or endotransglycosylation (XET). Cleaves and religates xyloglucan polymers, an essential constituent of the primary cell wall, and thereby participates in cell wall construction of growing tissues. May be required during development to modify the walls of cells under mechanical stress. The protein is Xyloglucan endotransglucosylase/hydrolase protein 24 (XTH24) of Arabidopsis thaliana (Mouse-ear cress).